Reading from the N-terminus, the 120-residue chain is Cell division topological specificity factor (120 aa).

Positions 93-120 (LNSCEGENPQQDPGAAPSEGGHLSSPSP) are disordered.

It belongs to the MinE family.

In terms of biological role, prevents the cell division inhibition by proteins MinC and MinD at internal division sites while permitting inhibition at polar sites. This ensures cell division at the proper site by restricting the formation of a division septum at the midpoint of the long axis of the cell. The sequence is that of Cell division topological specificity factor from Synechococcus sp. (strain JA-3-3Ab) (Cyanobacteria bacterium Yellowstone A-Prime).